Reading from the N-terminus, the 150-residue chain is uncharacterized protein (150 aa).

Positions 4–149 (IQIRNYQPGD…TNFYMRYKPQ (146 aa)) constitute an N-acetyltransferase domain.

The protein belongs to the acetyltransferase family.

This is an uncharacterized protein from Escherichia coli (strain K12).